The chain runs to 163 residues: Shikimate kinase (163 aa).

10–15 (GVGKTT) lines the ATP pocket. Residue Thr14 coordinates Mg(2+). Asp28, Arg52, and Gly75 together coordinate substrate. Residue Arg116 participates in ATP binding. Arg134 lines the substrate pocket. Arg151 contacts ATP.

This sequence belongs to the shikimate kinase family. As to quaternary structure, monomer. Mg(2+) is required as a cofactor.

It localises to the cytoplasm. It catalyses the reaction shikimate + ATP = 3-phosphoshikimate + ADP + H(+). It functions in the pathway metabolic intermediate biosynthesis; chorismate biosynthesis; chorismate from D-erythrose 4-phosphate and phosphoenolpyruvate: step 5/7. Catalyzes the specific phosphorylation of the 3-hydroxyl group of shikimic acid using ATP as a cosubstrate. The polypeptide is Shikimate kinase (Streptococcus pyogenes serotype M49 (strain NZ131)).